Reading from the N-terminus, the 431-residue chain is Peptidase B (431 aa).

2 residues coordinate Mn(2+): K196 and D201. The active site involves K208. Mn(2+) contacts are provided by D219, D278, and E280. R282 is an active-site residue.

This sequence belongs to the peptidase M17 family. As to quaternary structure, homohexamer. Mn(2+) is required as a cofactor.

Its subcellular location is the cytoplasm. The catalysed reaction is Release of an N-terminal amino acid, Xaa, from a peptide or arylamide. Xaa is preferably Glu or Asp but may be other amino acids, including Leu, Met, His, Cys and Gln.. In terms of biological role, probably plays an important role in intracellular peptide degradation. This Serratia proteamaculans (strain 568) protein is Peptidase B.